We begin with the raw amino-acid sequence, 356 residues long: Golgi-resident adenosine 3',5'-bisphosphate 3'-phosphatase (356 aa).

Residue Met1 is modified to N-acetylmethionine. Residues 1 to 12 (MAPMGIRLSPLG) are Cytoplasmic-facing. The chain crosses the membrane as a helical span at residues 13 to 33 (VAVFFLLGLGVLYHLYSGFLA). Topologically, residues 34-356 (GRFSLFGLGS…KLPDLEKSGH (323 aa)) are lumenal. The disordered stretch occupies residues 84–104 (ESNVLHEKSKGKTREGADDKM). The active-site Proton acceptor is the Asp108. 4 residues coordinate Mg(2+): Glu131, Asp172, Leu174, and Asp175. Catalysis depends on Thr177, which acts as the Proton acceptor. AMP-binding residues include Ser240 and His243. A glycan (N-linked (GlcNAc...) asparagine) is linked at Asn257. AMP contacts are provided by Gly266 and Lys270. Asp298 provides a ligand contact to Mg(2+).

Belongs to the inositol monophosphatase superfamily. The cofactor is Mg(2+). N-glycosylated. Contains N-linked glycan resistant to endoglycosydase H.

It localises to the golgi apparatus. It is found in the trans-Golgi network membrane. It carries out the reaction adenosine 3',5'-bisphosphate + H2O = AMP + phosphate. Its pathway is sulfur metabolism. Its activity is regulated as follows. Strongly inhibited by lithium. Functionally, exhibits 3'-nucleotidase activity toward adenosine 3',5'-bisphosphate (PAP), namely hydrolyzes adenosine 3',5'-bisphosphate into adenosine 5'-monophosphate (AMP) and a phosphate. May play a role in the formation of skeletal elements derived through endochondral ossification, possibly by clearing adenosine 3',5'-bisphosphate produced by Golgi sulfotransferases during glycosaminoglycan sulfation. Has no activity toward 3'-phosphoadenosine 5'-phosphosulfate (PAPS) or inositol phosphate (IP) substrates including I(1)P, I(1,4)P2, I(1,3,4)P3, I(1,4,5)P3 and I(1,3,4,5)P4. The protein is Golgi-resident adenosine 3',5'-bisphosphate 3'-phosphatase of Mus musculus (Mouse).